The following is a 1587-amino-acid chain: Sister chromatid cohesion protein mis4 (1587 aa).

Positions 140–172 are disordered; the sequence is PKEKPDASSINTNRSSSDNGFLTPSSSPRSPSC. The span at 147–162 shows a compositional bias: polar residues; that stretch reads SSINTNRSSSDNGFLT. Residues 163-172 show a composition bias toward low complexity; that stretch reads PSSSPRSPSC. Position 183 is a phosphoserine (serine 183). 6 HEAT repeats span residues 775–812, 814–851, 853–888, 890–927, 1101–1140, and 1183–1220; these read LNLKFFVSLIIGFLDSPQASLRTKCLRIINQMKTIPSI, RTHPEVLAQIISKSNDQSAIVRDTVLDLLGTYIMAYRE, IPQIYGCIISGISDPSTIVRKRAIKQLCEVYEATED, NIRVDIASKLLTRSNDEEETISELSLEVLEKLWFSPAS, ATLMEIVPCLCSLFTRLNDYERLKKIVVSCLKSLEEARHS, and DAYVILLGYFQKLLKDAKGQLRIHIIDNMSRICLRETS.

The protein belongs to the SCC2/Nipped-B family. Interacts with ssl3.

The protein resides in the nucleus. The protein localises to the chromosome. Plays a structural role in chromatin. Chromatid cohesion molecule required for equal sister chromatid separation in anaphase. May form a stable link between chromatids in S phase that is split rather than removed in anaphase. Also required for spindle-kinetochore interaction in early mitosis and inhibit sister chromatid separation until the cleavage of Rad21 in anaphase. The polypeptide is Sister chromatid cohesion protein mis4 (mis4) (Schizosaccharomyces pombe (strain 972 / ATCC 24843) (Fission yeast)).